Here is a 397-residue protein sequence, read N- to C-terminus: Succinate--CoA ligase [ADP-forming] subunit beta (397 aa).

The ATP-grasp domain occupies 9-254 (KALLREFGVP…ESEEDAKEIE (246 aa)). Residues Lys46, 53 to 55 (GRG), Glu109, Ser112, and Glu117 contribute to the ATP site. Residues Asn209 and Asp223 each contribute to the Mg(2+) site. Substrate contacts are provided by residues Asn274 and 331-333 (GIM).

This sequence belongs to the succinate/malate CoA ligase beta subunit family. Heterotetramer of two alpha and two beta subunits. It depends on Mg(2+) as a cofactor.

It catalyses the reaction succinate + ATP + CoA = succinyl-CoA + ADP + phosphate. The catalysed reaction is GTP + succinate + CoA = succinyl-CoA + GDP + phosphate. The protein operates within carbohydrate metabolism; tricarboxylic acid cycle; succinate from succinyl-CoA (ligase route): step 1/1. Functionally, succinyl-CoA synthetase functions in the citric acid cycle (TCA), coupling the hydrolysis of succinyl-CoA to the synthesis of either ATP or GTP and thus represents the only step of substrate-level phosphorylation in the TCA. The beta subunit provides nucleotide specificity of the enzyme and binds the substrate succinate, while the binding sites for coenzyme A and phosphate are found in the alpha subunit. This chain is Succinate--CoA ligase [ADP-forming] subunit beta, found in Nitrobacter hamburgensis (strain DSM 10229 / NCIMB 13809 / X14).